Here is a 324-residue protein sequence, read N- to C-terminus: Glyoxylate/hydroxypyruvate reductase B (324 aa).

Catalysis depends on residues R237 and E266. The active-site Proton donor is the H285.

Belongs to the D-isomer specific 2-hydroxyacid dehydrogenase family. GhrB subfamily. Homodimer.

The protein localises to the cytoplasm. The catalysed reaction is glycolate + NADP(+) = glyoxylate + NADPH + H(+). The enzyme catalyses (R)-glycerate + NAD(+) = 3-hydroxypyruvate + NADH + H(+). It catalyses the reaction (R)-glycerate + NADP(+) = 3-hydroxypyruvate + NADPH + H(+). Its function is as follows. Catalyzes the NADPH-dependent reduction of glyoxylate and hydroxypyruvate into glycolate and glycerate, respectively. The protein is Glyoxylate/hydroxypyruvate reductase B of Salmonella heidelberg (strain SL476).